We begin with the raw amino-acid sequence, 289 residues long: Shikimate dehydrogenase (NADP(+)) (289 aa).

Shikimate-binding positions include 19 to 21 (SMS) and T66. K70 functions as the Proton acceptor in the catalytic mechanism. Residues N91 and D106 each coordinate shikimate. NADP(+) contacts are provided by residues 131 to 135 (GAGGA), 155 to 160 (NRTLKK), and L229. Shikimate is bound at residue Y231. An NADP(+)-binding site is contributed by G252.

The protein belongs to the shikimate dehydrogenase family. In terms of assembly, homodimer.

The enzyme catalyses shikimate + NADP(+) = 3-dehydroshikimate + NADPH + H(+). It functions in the pathway metabolic intermediate biosynthesis; chorismate biosynthesis; chorismate from D-erythrose 4-phosphate and phosphoenolpyruvate: step 4/7. Functionally, involved in the biosynthesis of the chorismate, which leads to the biosynthesis of aromatic amino acids. Catalyzes the reversible NADPH linked reduction of 3-dehydroshikimate (DHSA) to yield shikimate (SA). The protein is Shikimate dehydrogenase (NADP(+)) of Halothermothrix orenii (strain H 168 / OCM 544 / DSM 9562).